A 348-amino-acid chain; its full sequence is Phosphoribosylformylglycinamidine cyclo-ligase (348 aa).

It belongs to the AIR synthase family.

Its subcellular location is the cytoplasm. The catalysed reaction is 2-formamido-N(1)-(5-O-phospho-beta-D-ribosyl)acetamidine + ATP = 5-amino-1-(5-phospho-beta-D-ribosyl)imidazole + ADP + phosphate + H(+). The protein operates within purine metabolism; IMP biosynthesis via de novo pathway; 5-amino-1-(5-phospho-D-ribosyl)imidazole from N(2)-formyl-N(1)-(5-phospho-D-ribosyl)glycinamide: step 2/2. The polypeptide is Phosphoribosylformylglycinamidine cyclo-ligase (Geobacter metallireducens (strain ATCC 53774 / DSM 7210 / GS-15)).